Here is a 463-residue protein sequence, read N- to C-terminus: Mitochondrial distribution and morphology protein 10 (463 aa).

The protein belongs to the MDM10 family. As to quaternary structure, component of the ER-mitochondria encounter structure (ERMES) or MDM complex, composed of MMM1, MDM10, MDM12 and MDM34. Associates with the mitochondrial outer membrane sorting assembly machinery SAM(core) complex.

It is found in the mitochondrion outer membrane. Its function is as follows. Component of the ERMES/MDM complex, which serves as a molecular tether to connect the endoplasmic reticulum and mitochondria. Components of this complex are involved in the control of mitochondrial shape and protein biogenesis and may function in phospholipid exchange. MDM10 is involved in the late assembly steps of the general translocase of the mitochondrial outer membrane (TOM complex). Functions in the TOM40-specific route of the assembly of outer membrane beta-barrel proteins, including the association of TOM40 with the receptor TOM22 and small TOM proteins. Can associate with the SAM(core) complex as well as the MDM12-MMM1 complex, both involved in late steps of the major beta-barrel assembly pathway, that is responsible for biogenesis of all outer membrane beta-barrel proteins. May act as a switch that shuttles between both complexes and channels precursor proteins into the TOM40-specific pathway. Plays a role in mitochondrial morphology and in the inheritance of mitochondria. This is Mitochondrial distribution and morphology protein 10 from Candida dubliniensis (strain CD36 / ATCC MYA-646 / CBS 7987 / NCPF 3949 / NRRL Y-17841) (Yeast).